The primary structure comprises 235 residues: Maximins-S type A (235 aa).

Positions 1 to 18 (MNFNYFILVLFFITSGHA) are cleaved as a signal peptide. Propeptides lie at residues 19–35 (KSETRDVHQEAENHIKR) and 52–65 (SAEEQNLAEDLVKR). Asparagine amide is present on asparagine 83. The propeptide occupies 87-100 (SAEEQDLAEDLVTR). Residue asparagine 118 is modified to Asparagine amide. Residues 122-135 (SAEEQDLAEDLVKR) constitute a propeptide that is removed on maturation. Asparagine amide is present on asparagine 153. A propeptide spanning residues 157-170 (SAEEQDLAEDLVTR) is cleaved from the precursor. The residue at position 188 (lysine 188) is a Lysine amide. Residues 192–205 (SAEDQDLAEDLVTR) constitute a propeptide that is removed on maturation. Lysine 223 is modified (lysine amide). A propeptide spanning residues 227–235 (SAEQEKDMK) is cleaved from the precursor.

It belongs to the maximin-S family. As to expression, expressed by the skin dorsal glands.

It localises to the secreted. In terms of biological role, maximin-S1 has no antimicrobial activity. Has no hemolytic activity. Maximin-S2 has an activity against mycoplasma but has no activity against common Gram-positive and Gram-negative bacteria nor fungi. Has no hemolytic activity. Its function is as follows. Maximin-S3 has an activity against mycoplasma but has no activity against common Gram-positive and Gram-negative bacteria nor fungi. Has no hemolytic activity. Functionally, maximin-S4 has an activity against mycoplasma but has no activity against common Gram-positive and Gram-negative bacteria nor fungi. Has no hemolytic activity. In terms of biological role, maximin-S5 has an activity against mycoplasma but has no activity against common Gram-positive and Gram-negative bacteria nor fungi. Has no hemolytic activity. The polypeptide is Maximins-S type A (Bombina maxima (Giant fire-bellied toad)).